A 743-amino-acid chain; its full sequence is Phosphoribosylformylglycinamidine synthase subunit PurL (743 aa).

His-53 is a catalytic residue. Positions 56 and 95 each coordinate ATP. Residue Glu-97 coordinates Mg(2+). Residues 98 to 101 (SHNH) and Arg-120 contribute to the substrate site. The active-site Proton acceptor is the His-99. Asp-121 contributes to the Mg(2+) binding site. A substrate-binding site is contributed by Gln-245. Residue Asp-275 coordinates Mg(2+). 319-321 (ESQ) is a substrate binding site. Residues Asp-502 and Gly-539 each coordinate ATP. Asn-540 contributes to the Mg(2+) binding site. Ser-542 contacts substrate.

It belongs to the FGAMS family. As to quaternary structure, monomer. Part of the FGAM synthase complex composed of 1 PurL, 1 PurQ and 2 PurS subunits.

Its subcellular location is the cytoplasm. The enzyme catalyses N(2)-formyl-N(1)-(5-phospho-beta-D-ribosyl)glycinamide + L-glutamine + ATP + H2O = 2-formamido-N(1)-(5-O-phospho-beta-D-ribosyl)acetamidine + L-glutamate + ADP + phosphate + H(+). It functions in the pathway purine metabolism; IMP biosynthesis via de novo pathway; 5-amino-1-(5-phospho-D-ribosyl)imidazole from N(2)-formyl-N(1)-(5-phospho-D-ribosyl)glycinamide: step 1/2. Part of the phosphoribosylformylglycinamidine synthase complex involved in the purines biosynthetic pathway. Catalyzes the ATP-dependent conversion of formylglycinamide ribonucleotide (FGAR) and glutamine to yield formylglycinamidine ribonucleotide (FGAM) and glutamate. The FGAM synthase complex is composed of three subunits. PurQ produces an ammonia molecule by converting glutamine to glutamate. PurL transfers the ammonia molecule to FGAR to form FGAM in an ATP-dependent manner. PurS interacts with PurQ and PurL and is thought to assist in the transfer of the ammonia molecule from PurQ to PurL. The chain is Phosphoribosylformylglycinamidine synthase subunit PurL from Lactobacillus helveticus (strain DPC 4571).